The sequence spans 375 residues: Chaperone protein DnaJ (375 aa).

The J domain occupies 4-68 (DYYEILGVSR…ETRARYDRFG (65 aa)). Residues 135–217 (GGEKEIRISH…CDGKGANQVT (83 aa)) form a CR-type zinc finger. Zn(2+) contacts are provided by C148, C151, C165, C168, C191, C194, C205, and C208. CXXCXGXG motif repeat units lie at residues 148–155 (CEVCSGSG), 165–172 (CSTCSGSG), 191–198 (CPTCNGTG), and 205–212 (CDACDGKG).

The protein belongs to the DnaJ family. Homodimer. Requires Zn(2+) as cofactor.

The protein localises to the cytoplasm. Participates actively in the response to hyperosmotic and heat shock by preventing the aggregation of stress-denatured proteins and by disaggregating proteins, also in an autonomous, DnaK-independent fashion. Unfolded proteins bind initially to DnaJ; upon interaction with the DnaJ-bound protein, DnaK hydrolyzes its bound ATP, resulting in the formation of a stable complex. GrpE releases ADP from DnaK; ATP binding to DnaK triggers the release of the substrate protein, thus completing the reaction cycle. Several rounds of ATP-dependent interactions between DnaJ, DnaK and GrpE are required for fully efficient folding. Also involved, together with DnaK and GrpE, in the DNA replication of plasmids through activation of initiation proteins. This chain is Chaperone protein DnaJ, found in Nostoc punctiforme (strain ATCC 29133 / PCC 73102).